The following is a 306-amino-acid chain: Transcription initiation factor IIB 2 (306 aa).

Residues 6-37 (PKRVCPICGSTEFIYDPRRGEIVCAKCGYVIE) form a TFIIB-type zinc finger. Cys-10, Cys-13, Cys-29, and Cys-32 together coordinate Zn(2+). 2 tandem repeats follow at residues 123 to 206 (SELD…ARGL) and 217 to 298 (EYVD…ELVE).

It belongs to the TFIIB family.

In terms of biological role, stabilizes TBP binding to an archaeal box-A promoter. Also responsible for recruiting RNA polymerase II to the pre-initiation complex (DNA-TBP-TFIIB). The protein is Transcription initiation factor IIB 2 of Thermococcus kodakarensis (strain ATCC BAA-918 / JCM 12380 / KOD1) (Pyrococcus kodakaraensis (strain KOD1)).